Reading from the N-terminus, the 68-residue chain is MKIIVVLAVLMLVSAQVCLVSAAEMGHSSDNELSSRDLVKRFFLPPCAHKGTCGKRSIESSEGANGGE.

A signal peptide spans 1 to 15 (MKIIVVLAVLMLVSA). The propeptide occupies 16–41 (QVCLVSAAEMGHSSDNELSSRDLVKR). The cysteines at positions 47 and 53 are disulfide-linked. A Cysteine amide modification is found at cysteine 53. Positions 57-68 (SIESSEGANGGE) are excised as a propeptide.

As to expression, expressed by the skin glands.

The protein resides in the secreted. In Crinia riparia (Streambank froglet), this protein is Riparin-1.5 amide.